The chain runs to 376 residues: Lactosylceramide 1,3-N-acetyl-beta-D-glucosaminyltransferase (376 aa).

Residues 1 to 13 are Cytoplasmic-facing; sequence MRLFVSRRVKRWK. A helical; Signal-anchor for type II membrane protein transmembrane segment spans residues 14-34; sequence IFHFFVTCFILSFMVFWSPIN. The Lumenal segment spans residues 35 to 376; it reads NYIMSHMKSY…NSYPCWAAFA (342 aa). The N-linked (GlcNAc...) asparagine glycan is linked to asparagine 57.

Belongs to the glycosyltransferase 31 family. Highly expressed in adult spleen, placenta and cerebellar Purkinje cells where it colocalizes with HNK-1. Expressed at lower level in brain, lung, thymus and muscle.

Its subcellular location is the golgi apparatus membrane. The enzyme catalyses a beta-D-Gal-(1-&gt;4)-beta-D-Glc-(1&lt;-&gt;1)-Cer(d18:1(4E)) + UDP-N-acetyl-alpha-D-glucosamine = a beta-D-GlcNAc-(1-&gt;3)-beta-D-Gal-(1-&gt;4)-beta-D-Glc-(1&lt;-&gt;1)-Cer(d18:1(4E)) + UDP + H(+). The catalysed reaction is a neolactoside nLc4Cer(d18:1(4E)) + UDP-N-acetyl-alpha-D-glucosamine = a neolactoside IV(3)-beta-GlcNAc-nLc4Cer(d18:1(4E)) + UDP + H(+). Its pathway is protein modification; protein glycosylation. Beta-1,3-N-acetylglucosaminyltransferase that plays a key role in the synthesis of lacto- or neolacto-series carbohydrate chains on glycolipids, notably by participating in biosynthesis of HNK-1 and Lewis X carbohydrate structures. Has strong activity toward lactosylceramide (LacCer) and neolactotetraosylceramide (nLc(4)Cer; paragloboside), resulting in the synthesis of Lc(3)Cer and neolactopentaosylceramide (nLc(5)Cer), respectively. Plays a central role in regulating neolacto-series glycolipid synthesis during embryonic development. In Mus musculus (Mouse), this protein is Lactosylceramide 1,3-N-acetyl-beta-D-glucosaminyltransferase.